Reading from the N-terminus, the 394-residue chain is 1-deoxy-D-xylulose 5-phosphate reductoisomerase (394 aa).

Threonine 13, glycine 14, serine 15, valine 16, arginine 40, glutamine 41, and asparagine 127 together coordinate NADPH. Lysine 128 lines the 1-deoxy-D-xylulose 5-phosphate pocket. An NADPH-binding site is contributed by glutamate 129. Position 153 (aspartate 153) interacts with Mn(2+). Residues serine 154, glutamate 155, serine 184, and histidine 207 each contribute to the 1-deoxy-D-xylulose 5-phosphate site. Glutamate 155 contacts Mn(2+). Glycine 213 serves as a coordination point for NADPH. 1-deoxy-D-xylulose 5-phosphate is bound by residues serine 220, asparagine 225, lysine 226, and glutamate 229. Glutamate 229 is a binding site for Mn(2+).

It belongs to the DXR family. Mg(2+) is required as a cofactor. The cofactor is Mn(2+).

The enzyme catalyses 2-C-methyl-D-erythritol 4-phosphate + NADP(+) = 1-deoxy-D-xylulose 5-phosphate + NADPH + H(+). It functions in the pathway isoprenoid biosynthesis; isopentenyl diphosphate biosynthesis via DXP pathway; isopentenyl diphosphate from 1-deoxy-D-xylulose 5-phosphate: step 1/6. In terms of biological role, catalyzes the NADPH-dependent rearrangement and reduction of 1-deoxy-D-xylulose-5-phosphate (DXP) to 2-C-methyl-D-erythritol 4-phosphate (MEP). In Chromobacterium violaceum (strain ATCC 12472 / DSM 30191 / JCM 1249 / CCUG 213 / NBRC 12614 / NCIMB 9131 / NCTC 9757 / MK), this protein is 1-deoxy-D-xylulose 5-phosphate reductoisomerase.